The chain runs to 563 residues: Methylcrotonoyl-CoA carboxylase beta chain, mitochondrial (563 aa).

A mitochondrion-targeting transit peptide spans 1–22 (MWAVLRLALRPCARASPAGPRA). The CoA carboxyltransferase N-terminal domain maps to 49–306 (MKALVNQLHE…QKKLDVTIEP (258 aa)). Positions 49 to 555 (MKALVNQLHE…SAALNAPIEK (507 aa)) are carboxyltransferase. K70 bears the N6-acetyllysine; alternate mark. Residue K70 is modified to N6-succinyllysine; alternate. K141 bears the N6-succinyllysine mark. In terms of domain architecture, CoA carboxyltransferase C-terminal spans 309–555 (EPLFPADELY…SAALNAPIEK (247 aa)). The tract at residues 343 to 372 (RFTEFKAFYGDTLVTGFARIFGYPVGIVGN) is acyl-CoA binding. An N6-acetyllysine; alternate modification is found at K495. The residue at position 495 (K495) is an N6-succinyllysine; alternate. K511 carries the N6-acetyllysine modification.

The protein belongs to the AccD/PCCB family. Probably a dodecamer composed of six biotin-containing alpha subunits (MCCC1) and six beta (MCCC2) subunits.

The protein localises to the mitochondrion matrix. The enzyme catalyses 3-methylbut-2-enoyl-CoA + hydrogencarbonate + ATP = 3-methyl-(2E)-glutaconyl-CoA + ADP + phosphate + H(+). Its pathway is amino-acid degradation; L-leucine degradation; (S)-3-hydroxy-3-methylglutaryl-CoA from 3-isovaleryl-CoA: step 2/3. Carboxyltransferase subunit of the 3-methylcrotonyl-CoA carboxylase, an enzyme that catalyzes the conversion of 3-methylcrotonyl-CoA to 3-methylglutaconyl-CoA, a critical step for leucine and isovaleric acid catabolism. In Homo sapiens (Human), this protein is Methylcrotonoyl-CoA carboxylase beta chain, mitochondrial (MCCC2).